The primary structure comprises 316 residues: Ornithine carbamoyltransferase (316 aa).

Carbamoyl phosphate contacts are provided by residues 57–60, Gln84, Arg108, and 135–138; these read STRT and HPCQ. L-ornithine is bound by residues Asn166, Asp230, and 234–235; that span reads SM. Residues 269–270 and Arg297 each bind carbamoyl phosphate; that span reads CL.

This sequence belongs to the aspartate/ornithine carbamoyltransferase superfamily. OTCase family.

It is found in the cytoplasm. The catalysed reaction is carbamoyl phosphate + L-ornithine = L-citrulline + phosphate + H(+). The protein operates within amino-acid degradation; L-arginine degradation via ADI pathway; carbamoyl phosphate from L-arginine: step 2/2. In terms of biological role, reversibly catalyzes the transfer of the carbamoyl group from carbamoyl phosphate (CP) to the N(epsilon) atom of ornithine (ORN) to produce L-citrulline. This is Ornithine carbamoyltransferase from Bacillus anthracis (strain CDC 684 / NRRL 3495).